A 799-amino-acid chain; its full sequence is LPS-assembly protein LptD (799 aa).

An N-terminal signal peptide occupies residues 1-34 (MMHELDLRPHLARFAQRPLALLAWALLQGTSVNA).

This sequence belongs to the LptD family. As to quaternary structure, component of the lipopolysaccharide transport and assembly complex. Interacts with LptE and LptA.

The protein resides in the cell outer membrane. Functionally, together with LptE, is involved in the assembly of lipopolysaccharide (LPS) at the surface of the outer membrane. This chain is LPS-assembly protein LptD, found in Albidiferax ferrireducens (strain ATCC BAA-621 / DSM 15236 / T118) (Rhodoferax ferrireducens).